Consider the following 155-residue polypeptide: Ribosomal RNA large subunit methyltransferase H (155 aa).

Residues Leu-72, Gly-103, and Leu-122–Phe-127 contribute to the S-adenosyl-L-methionine site.

This sequence belongs to the RNA methyltransferase RlmH family. As to quaternary structure, homodimer.

The protein localises to the cytoplasm. It catalyses the reaction pseudouridine(1915) in 23S rRNA + S-adenosyl-L-methionine = N(3)-methylpseudouridine(1915) in 23S rRNA + S-adenosyl-L-homocysteine + H(+). Specifically methylates the pseudouridine at position 1915 (m3Psi1915) in 23S rRNA. This is Ribosomal RNA large subunit methyltransferase H from Alkalilimnicola ehrlichii (strain ATCC BAA-1101 / DSM 17681 / MLHE-1).